Reading from the N-terminus, the 328-residue chain is MHNAIYTDLQKEVEVILARPRGFCAGVSRAIEIVKLAIEYYKDTKTIYVLHEIVHNKYIVETLKTMGVIFIDKVDQAQDGSVLIYSAHGVSKSIKQLAELRDLEVIDATCPLVNKVHKEVQLYDKSGYQVILIGHKGHREVEGTVGQISTPVIIVQNLNDIDKIEIFDPDKLAYVTQTTLSVDDTKVIIDKLKKKFPNIKGPDLKDICYATQNRQTTTKRLAELVDIVFILGSKNSSNSNRLKELAGIQTQAFLIDSYKEIDLNLLNDITKIGITAGASAPDILVQQVIDFLKQHMKVKLSDLEIVQESVTFNVPRQLRQYKEQYNPI.

Residue cysteine 24 participates in [4Fe-4S] cluster binding. Residues histidine 55 and histidine 88 each coordinate (2E)-4-hydroxy-3-methylbut-2-enyl diphosphate. 2 residues coordinate dimethylallyl diphosphate: histidine 55 and histidine 88. 2 residues coordinate isopentenyl diphosphate: histidine 55 and histidine 88. A [4Fe-4S] cluster-binding site is contributed by cysteine 110. A (2E)-4-hydroxy-3-methylbut-2-enyl diphosphate-binding site is contributed by histidine 138. Histidine 138 contacts dimethylallyl diphosphate. Position 138 (histidine 138) interacts with isopentenyl diphosphate. Glutamate 140 (proton donor) is an active-site residue. Position 178 (threonine 178) interacts with (2E)-4-hydroxy-3-methylbut-2-enyl diphosphate. Residue cysteine 208 participates in [4Fe-4S] cluster binding. Residues serine 236, serine 237, asparagine 238, and serine 279 each coordinate (2E)-4-hydroxy-3-methylbut-2-enyl diphosphate. The dimethylallyl diphosphate site is built by serine 236, serine 237, asparagine 238, and serine 279. Residues serine 236, serine 237, asparagine 238, and serine 279 each coordinate isopentenyl diphosphate.

Belongs to the IspH family. The cofactor is [4Fe-4S] cluster.

The enzyme catalyses isopentenyl diphosphate + 2 oxidized [2Fe-2S]-[ferredoxin] + H2O = (2E)-4-hydroxy-3-methylbut-2-enyl diphosphate + 2 reduced [2Fe-2S]-[ferredoxin] + 2 H(+). It carries out the reaction dimethylallyl diphosphate + 2 oxidized [2Fe-2S]-[ferredoxin] + H2O = (2E)-4-hydroxy-3-methylbut-2-enyl diphosphate + 2 reduced [2Fe-2S]-[ferredoxin] + 2 H(+). It functions in the pathway isoprenoid biosynthesis; dimethylallyl diphosphate biosynthesis; dimethylallyl diphosphate from (2E)-4-hydroxy-3-methylbutenyl diphosphate: step 1/1. Its pathway is isoprenoid biosynthesis; isopentenyl diphosphate biosynthesis via DXP pathway; isopentenyl diphosphate from 1-deoxy-D-xylulose 5-phosphate: step 6/6. Functionally, catalyzes the conversion of 1-hydroxy-2-methyl-2-(E)-butenyl 4-diphosphate (HMBPP) into a mixture of isopentenyl diphosphate (IPP) and dimethylallyl diphosphate (DMAPP). Acts in the terminal step of the DOXP/MEP pathway for isoprenoid precursor biosynthesis. The sequence is that of 4-hydroxy-3-methylbut-2-enyl diphosphate reductase from Ehrlichia ruminantium (strain Welgevonden).